The sequence spans 420 residues: Serine hydroxymethyltransferase (420 aa).

(6S)-5,6,7,8-tetrahydrofolate-binding positions include L121 and 125–127; that span reads GHL. K229 carries the post-translational modification N6-(pyridoxal phosphate)lysine.

The protein belongs to the SHMT family. Homodimer. The cofactor is pyridoxal 5'-phosphate.

It localises to the cytoplasm. The enzyme catalyses (6R)-5,10-methylene-5,6,7,8-tetrahydrofolate + glycine + H2O = (6S)-5,6,7,8-tetrahydrofolate + L-serine. The protein operates within one-carbon metabolism; tetrahydrofolate interconversion. It functions in the pathway amino-acid biosynthesis; glycine biosynthesis; glycine from L-serine: step 1/1. Its function is as follows. Catalyzes the reversible interconversion of serine and glycine with tetrahydrofolate (THF) serving as the one-carbon carrier. This reaction serves as the major source of one-carbon groups required for the biosynthesis of purines, thymidylate, methionine, and other important biomolecules. Also exhibits THF-independent aldolase activity toward beta-hydroxyamino acids, producing glycine and aldehydes, via a retro-aldol mechanism. This chain is Serine hydroxymethyltransferase, found in Streptomyces coelicolor (strain ATCC BAA-471 / A3(2) / M145).